We begin with the raw amino-acid sequence, 182 residues long: Ribosome-recycling factor (182 aa).

A disordered region spans residues 136 to 158; sequence IKKQEKEGDLSEDQSRDEQDQVQ.

This sequence belongs to the RRF family.

The protein localises to the cytoplasm. In terms of biological role, responsible for the release of ribosomes from messenger RNA at the termination of protein biosynthesis. May increase the efficiency of translation by recycling ribosomes from one round of translation to another. The polypeptide is Ribosome-recycling factor (Synechococcus sp. (strain CC9311)).